The following is a 347-amino-acid chain: Syntaxin-32 (347 aa).

The Cytoplasmic segment spans residues 1-325 (MSARHGQSSY…RYLNSISSNR (325 aa)). Disordered regions lie at residues 172–191 (HESR…TNPF) and 208–251 (PLPW…QQMV). Composition is skewed to polar residues over residues 177-191 (QLFS…TNPF) and 213-222 (NGSSSSSSQL). Residues 237 to 249 (QQSQQQQQQQQQQ) are compositionally biased toward low complexity. Positions 255 to 317 (DTYMQGRAEA…EGAQSQLARY (63 aa)) constitute a t-SNARE coiled-coil homology domain. The helical; Anchor for type IV membrane protein transmembrane segment at 326–346 (WLMMKIFFVLIAFLMIFLFFV) threads the bilayer. Residue A347 is a topological domain, vesicular.

Belongs to the syntaxin family. Part of the t-SNARE complex.

It localises to the golgi apparatus. The protein localises to the cis-Golgi network membrane. Functionally, vesicle trafficking protein that functions in the secretory pathway. The protein is Syntaxin-32 (SYP32) of Arabidopsis thaliana (Mouse-ear cress).